Here is a 130-residue protein sequence, read N- to C-terminus: Ribosome-binding factor A (130 aa).

This sequence belongs to the RbfA family. Monomer. Binds 30S ribosomal subunits, but not 50S ribosomal subunits or 70S ribosomes.

It localises to the cytoplasm. One of several proteins that assist in the late maturation steps of the functional core of the 30S ribosomal subunit. Associates with free 30S ribosomal subunits (but not with 30S subunits that are part of 70S ribosomes or polysomes). Required for efficient processing of 16S rRNA. May interact with the 5'-terminal helix region of 16S rRNA. The chain is Ribosome-binding factor A from Prochlorococcus marinus (strain MIT 9312).